The following is a 379-amino-acid chain: Epoxyqueuosine reductase (379 aa).

Asp139 acts as the Proton donor in catalysis. Residues 181-213 (IPLPVDQPVEEGCGKCVACMTICPTGAIVEPYT) form the 4Fe-4S ferredoxin-type domain. [4Fe-4S] cluster is bound by residues Cys193, Cys196, Cys199, Cys203, Cys219, Cys246, Cys249, and Cys253.

This sequence belongs to the QueG family. Monomer. It depends on cob(II)alamin as a cofactor. Requires [4Fe-4S] cluster as cofactor.

Its subcellular location is the cytoplasm. The catalysed reaction is epoxyqueuosine(34) in tRNA + AH2 = queuosine(34) in tRNA + A + H2O. Its pathway is tRNA modification; tRNA-queuosine biosynthesis. In terms of biological role, catalyzes the conversion of epoxyqueuosine (oQ) to queuosine (Q), which is a hypermodified base found in the wobble positions of tRNA(Asp), tRNA(Asn), tRNA(His) and tRNA(Tyr). The sequence is that of Epoxyqueuosine reductase from Shigella dysenteriae serotype 1 (strain Sd197).